The following is a 342-amino-acid chain: Global transcription regulator FGP1 (342 aa).

The segment at 91 to 113 is disordered; it reads FSPGEKKRASKKPKKQAGVAKAY.

This sequence belongs to the MIT1/WOR1 family.

The protein localises to the nucleus. Global transcriptional regulator of pathogenicity. Regulates many genes during growth in putrescine medium and during infection. Involved in the developmental processes of conidium formation and sexual reproduction and modulates a morphological change that accompanies mycotoxin production. The polypeptide is Global transcription regulator FGP1 (Gibberella zeae (strain ATCC MYA-4620 / CBS 123657 / FGSC 9075 / NRRL 31084 / PH-1) (Wheat head blight fungus)).